We begin with the raw amino-acid sequence, 183 residues long: uncharacterized protein (183 aa).

The SIS domain occupies Met-27 to Leu-170.

The protein belongs to the SIS family. PHI subfamily.

This is an uncharacterized protein from Archaeoglobus fulgidus (strain ATCC 49558 / DSM 4304 / JCM 9628 / NBRC 100126 / VC-16).